The following is a 172-amino-acid chain: Large ribosomal subunit protein bL17 (172 aa).

Residues 123–172 form a disordered region; sequence ATGSKRAQTEEAASQEPAAEAGKQPAEGATSVQTAEAADASQAEGEAEEK. The segment covering 132–143 has biased composition (low complexity); it reads EEAASQEPAAEA.

This sequence belongs to the bacterial ribosomal protein bL17 family. In terms of assembly, part of the 50S ribosomal subunit. Contacts protein L32.

In Thermobifida fusca (strain YX), this protein is Large ribosomal subunit protein bL17.